A 348-amino-acid chain; its full sequence is Dihydroorotase (348 aa).

Zn(2+) contacts are provided by histidine 17 and histidine 19. Substrate is bound by residues 19–21 (HLR) and asparagine 45. Zn(2+) contacts are provided by lysine 103, histidine 140, and histidine 178. Lysine 103 is subject to N6-carboxylysine. Residue histidine 140 coordinates substrate. Residue leucine 223 participates in substrate binding. Aspartate 251 serves as a coordination point for Zn(2+). Residue aspartate 251 is part of the active site. The substrate site is built by histidine 255 and alanine 267.

It belongs to the metallo-dependent hydrolases superfamily. DHOase family. Class II DHOase subfamily. In terms of assembly, homodimer. Zn(2+) serves as cofactor.

It catalyses the reaction (S)-dihydroorotate + H2O = N-carbamoyl-L-aspartate + H(+). It participates in pyrimidine metabolism; UMP biosynthesis via de novo pathway; (S)-dihydroorotate from bicarbonate: step 3/3. Its function is as follows. Catalyzes the reversible cyclization of carbamoyl aspartate to dihydroorotate. This chain is Dihydroorotase, found in Salmonella typhi.